Here is a 49-residue protein sequence, read N- to C-terminus: Photosystem I reaction center subunit IX (49 aa).

A helical transmembrane segment spans residues 14 to 34 (FISTAPVAATIWLTITAGILI).

Belongs to the PsaJ family.

It is found in the cellular thylakoid membrane. Functionally, may help in the organization of the PsaE and PsaF subunits. The polypeptide is Photosystem I reaction center subunit IX (Nostoc punctiforme (strain ATCC 29133 / PCC 73102)).